The chain runs to 238 residues: Probable transcriptional regulatory protein M6_Spy0297 (238 aa).

Belongs to the TACO1 family. YeeN subfamily.

Its subcellular location is the cytoplasm. The protein is Probable transcriptional regulatory protein M6_Spy0297 of Streptococcus pyogenes serotype M6 (strain ATCC BAA-946 / MGAS10394).